A 218-amino-acid polypeptide reads, in one-letter code: MSYHEVNFIEMRVIGCLMEKEITTPDQYPLSLNALVNACNQKSNREPVTQLSEIEVQDALDALVSRGLVTEINASHSRVSKYQHRFCNTEFSDLQLSPAETAIICLMFVRGAQTPGELRSRSGRLHSFQSRDEVELALQSLQTKTGGPYVCLLPREPGKREQRYQECFCSESDRPAASFSSDTSDEYTQQLEAKVKELEAQVEKLNERINELENASGL.

The protein belongs to the UPF0502 family.

This is UPF0502 protein Mmwyl1_3509 from Marinomonas sp. (strain MWYL1).